The chain runs to 586 residues: Aspartate--tRNA(Asp/Asn) ligase (586 aa).

Position 172 (Glu-172) interacts with L-aspartate. Residues 196 to 199 (QLYK) form an aspartate region. Arg-218 lines the L-aspartate pocket. Residues 218 to 220 (RDE) and Gln-227 contribute to the ATP site. L-aspartate is bound at residue His-446. Glu-480 contributes to the ATP binding site. Arg-487 contacts L-aspartate. 532-535 (GIDR) lines the ATP pocket.

It belongs to the class-II aminoacyl-tRNA synthetase family. Type 1 subfamily. Homodimer.

It is found in the cytoplasm. It carries out the reaction tRNA(Asx) + L-aspartate + ATP = L-aspartyl-tRNA(Asx) + AMP + diphosphate. Its function is as follows. Aspartyl-tRNA synthetase with relaxed tRNA specificity since it is able to aspartylate not only its cognate tRNA(Asp) but also tRNA(Asn). Reaction proceeds in two steps: L-aspartate is first activated by ATP to form Asp-AMP and then transferred to the acceptor end of tRNA(Asp/Asn). This Borreliella afzelii (strain PKo) (Borrelia afzelii) protein is Aspartate--tRNA(Asp/Asn) ligase.